The primary structure comprises 222 residues: Ethylene-inducing xylanase 2 (222 aa).

An N-terminal signal peptide occupies residues 1–19; it reads MITFSSLLVTFSAISTSLA. A GH11 domain is found at 36–222; sequence QRNESSLVRR…GEGAATQTVS (187 aa). 2 N-linked (GlcNAc...) asparagine glycosylation sites follow: asparagine 38 and asparagine 94. Residue glutamate 120 is the Nucleophile of the active site. Glutamate 209 (proton donor) is an active-site residue.

Belongs to the glycosyl hydrolase 11 (cellulase G) family.

It catalyses the reaction Endohydrolysis of (1-&gt;4)-beta-D-xylosidic linkages in xylans.. It participates in glycan degradation; xylan degradation. Functionally, endo-1,4-beta-xylanase involved in the hydrolysis of xylan, a major structural heterogeneous polysaccharide found in plant biomass representing the second most abundant polysaccharide in the biosphere, after cellulose. May act as an elicitor of plant defense responses in certain plants but does not exhibit any cell death when transiently expressed in N.benthamiana. This Botryotinia fuckeliana (strain B05.10) (Noble rot fungus) protein is Ethylene-inducing xylanase 2.